A 304-amino-acid chain; its full sequence is L-xylo-3-hexulose reductase (304 aa).

Ile19, Asp68, and Asn107 together coordinate NADP(+). Catalysis depends on proton donor residues Ser163 and Ser164. Residues Tyr177, Lys181, and Ala209 each coordinate NADP(+). Catalysis depends on Tyr177, which acts as the Proton acceptor. Residue Lys181 is the Lowers pKa of active site Tyr of the active site.

The protein belongs to the short-chain dehydrogenases/reductases (SDR) family.

It carries out the reaction D-sorbitol + NADP(+) = L-xylo-3-hexulose + NADPH + H(+). It participates in carbohydrate degradation. Its function is as follows. L-xylulose reductase involved in the catabolism of D-galactose through an oxidoreductive pathway. Catalyzes the NADPH-dependent reduction of L-xylo-3-hexulose. Is also active with D-ribulose and L-xylulose, and to a lesser extent with D-xylulose, D-fructose and L- and D-sorbose. In the reverse reaction, shows activity with D-sorbitol and D-mannitol, low activity with xylitol, but no activity with galactitol, ribitol, and L- and D-arabitol. This chain is L-xylo-3-hexulose reductase, found in Hypocrea jecorina (strain QM6a) (Trichoderma reesei).